The sequence spans 532 residues: 5-methylcytosine-modifying enzyme 1 (532 aa).

335–337 (SLT) provides a ligand contact to L-ascorbate. The Fe cation site is built by His345, Asp347, and His397. 397–399 (HGT) lines the L-ascorbate pocket.

This sequence belongs to the TET family. Fe(2+) serves as cofactor.

It is found in the nucleus. It catalyses the reaction a 5-methyl-2'-deoxycytidine in DNA + L-ascorbate + O2 = a (8S,9S)-5-glyceryl-2'-deoxycytidine in DNA + glyoxylate + CO2. It carries out the reaction a 5-methyl-2'-deoxycytidine in DNA + L-ascorbate + O2 = a (8S,9R)-5-glyceryl-2'-deoxycytidine in DNA + glyoxylate + CO2. Its function is as follows. Dioxygenase that catalyzes DNA modification by mediating the conversion of the modified genomic base 5-methylcytosine (5mC) into 5-glyceryl-methylcytosine (5gmC). Catalyzes the conjugation of a glyceryl moiety from L-ascorbate (vitamin C) to the methyl group of 5mC through a carbon-carbon bond. 5gmC DNA modification may be required during photosynthesis as an epigenetic mark that couteracts DNA methylation. This Chlamydomonas reinhardtii (Chlamydomonas smithii) protein is 5-methylcytosine-modifying enzyme 1.